Reading from the N-terminus, the 323-residue chain is L-lactate dehydrogenase (323 aa).

NAD(+) contacts are provided by residues Val16, Asn37, and 81-82; that span reads GA. Residues Gln84, Arg90, and 122–125 each bind substrate; that span reads NPVD. NAD(+) contacts are provided by residues 120 to 122 and Ser145; that span reads ATN. Residue 150–153 participates in substrate binding; the sequence is DSAR. His177 acts as the Proton acceptor in catalysis. Position 221 is a phosphotyrosine (Tyr221). Thr230 contributes to the substrate binding site.

It belongs to the LDH/MDH superfamily. LDH family. As to quaternary structure, homotetramer.

Its subcellular location is the cytoplasm. It catalyses the reaction (S)-lactate + NAD(+) = pyruvate + NADH + H(+). The protein operates within fermentation; pyruvate fermentation to lactate; (S)-lactate from pyruvate: step 1/1. In terms of biological role, catalyzes the conversion of lactate to pyruvate. The chain is L-lactate dehydrogenase from Limosilactobacillus reuteri (Lactobacillus reuteri).